The sequence spans 937 residues: Isoleucine--tRNA ligase (937 aa).

The 'HIGH' region signature appears at 58–68 (PYANGHIHLGT). An L-isoleucyl-5'-AMP-binding site is contributed by Glu-566. The 'KMSKS' region motif lies at 607–611 (KMSKS). Residue Lys-610 participates in ATP binding. The Zn(2+) site is built by Cys-906, Cys-909, Cys-925, and Cys-928.

The protein belongs to the class-I aminoacyl-tRNA synthetase family. IleS type 1 subfamily. Monomer. The cofactor is Zn(2+).

The protein resides in the cytoplasm. The enzyme catalyses tRNA(Ile) + L-isoleucine + ATP = L-isoleucyl-tRNA(Ile) + AMP + diphosphate. Catalyzes the attachment of isoleucine to tRNA(Ile). As IleRS can inadvertently accommodate and process structurally similar amino acids such as valine, to avoid such errors it has two additional distinct tRNA(Ile)-dependent editing activities. One activity is designated as 'pretransfer' editing and involves the hydrolysis of activated Val-AMP. The other activity is designated 'posttransfer' editing and involves deacylation of mischarged Val-tRNA(Ile). The sequence is that of Isoleucine--tRNA ligase from Lawsonia intracellularis (strain PHE/MN1-00).